Consider the following 227-residue polypeptide: UPF0173 metal-dependent hydrolase Oter_4201 (227 aa).

It belongs to the UPF0173 family.

This Opitutus terrae (strain DSM 11246 / JCM 15787 / PB90-1) protein is UPF0173 metal-dependent hydrolase Oter_4201.